The sequence spans 184 residues: NADH-quinone oxidoreductase subunit B 1 (184 aa).

Cys37, Cys38, Cys103, and Cys132 together coordinate [4Fe-4S] cluster.

Belongs to the complex I 20 kDa subunit family. In terms of assembly, NDH-1 is composed of 14 different subunits. Subunits NuoB, C, D, E, F, and G constitute the peripheral sector of the complex. [4Fe-4S] cluster is required as a cofactor.

Its subcellular location is the cell membrane. The catalysed reaction is a quinone + NADH + 5 H(+)(in) = a quinol + NAD(+) + 4 H(+)(out). Functionally, NDH-1 shuttles electrons from NADH, via FMN and iron-sulfur (Fe-S) centers, to quinones in the respiratory chain. The immediate electron acceptor for the enzyme in this species is believed to be a menaquinone. Couples the redox reaction to proton translocation (for every two electrons transferred, four hydrogen ions are translocated across the cytoplasmic membrane), and thus conserves the redox energy in a proton gradient. The chain is NADH-quinone oxidoreductase subunit B 1 from Streptomyces coelicolor (strain ATCC BAA-471 / A3(2) / M145).